The primary structure comprises 251 residues: Ribosome maturation factor RimP (251 aa).

Residues 176–251 (SLRRGSAPPQ…ARLKNRDTLH (76 aa)) form a disordered region. Acidic residues predominate over residues 186 to 196 (DGEEGDEEEGA). A compositionally biased stretch (basic and acidic residues) spans 216-226 (PKLDKKSDKPV).

This sequence belongs to the RimP family.

Its subcellular location is the cytoplasm. Its function is as follows. Required for maturation of 30S ribosomal subunits. This is Ribosome maturation factor RimP from Methylorubrum extorquens (strain PA1) (Methylobacterium extorquens).